The primary structure comprises 72 residues: MEKLIILLLVAAVLMSTQALFQEKRTMKKIDFLSKGKADAEKQRKRNCSDDWQYCESPSDCCSWDCDVVCSG.

An N-terminal signal peptide occupies residues 1-19 (MEKLIILLLVAAVLMSTQA). Residues 20–44 (LFQEKRTMKKIDFLSKGKADAEKQR) constitute a propeptide that is removed on maturation. 3 disulfide bridges follow: cysteine 48–cysteine 62, cysteine 55–cysteine 66, and cysteine 61–cysteine 70. Glutamate 56 carries the post-translational modification 4-carboxyglutamate. Residue proline 58 is modified to 4-hydroxyproline. Serine 71 bears the Serine amide mark.

Brominated at one of the Trp residues. In terms of tissue distribution, expressed by the venom duct.

The protein localises to the secreted. The polypeptide is Conotoxin Gla(2)-TxVI/B (Conus textile (Cloth-of-gold cone)).